We begin with the raw amino-acid sequence, 870 residues long: H(+)/Cl(-) exchange transporter 6 (870 aa).

Residues 1-80 (MAGCRGSVCC…KKGRRYEAVK (80 aa)) are Cytoplasmic-facing. Transmembrane regions (helical) follow at residues 81–113 (WMVV…FGVV) and 128–150 (LSLL…LVLI). Positions 156–160 (GSGIP) match the Selectivity filter part_1 motif. Residue serine 157 participates in chloride binding. The helical intramembrane region spans 159–166 (IPEIKCYL). The next 2 membrane-spanning stretches (helical) occupy residues 176 to 194 (RLRT…VSGG) and 200 to 217 (EGPM…LPQF). The Selectivity filter part_2 signature appears at 198–202 (GKEGP). Intramembrane regions (helical) lie at residues 241–253 (FVSA…VAAA) and 257–265 (PIGGTLFSL). 3 helical membrane passes run 277–294 (TWKV…LNFF), 335–364 (GFFV…YRMR), and 371–392 (KLVR…VFVA). N-linked (GlcNAc...) asparagine glycans are attached at residues asparagine 410, asparagine 423, and asparagine 433. Helical transmembrane passes span 463 to 482 (PVTL…WTFG) and 488 to 512 (GLFV…KSYI). Positions 488 to 492 (GLFVP) match the Selectivity filter part_3 motif. Phenylalanine 490 contacts chloride. Residues 520-534 (GTFALIGAAAFLGGV) constitute an intramembrane region (helical). Residues 535-537 (VRM) constitute an intramembrane region (note=Loop between two helices). Positions 538 to 549 (TISLTVILIEST) form an intramembrane region, helical. Positions 550 to 553 (NEIT) form an intramembrane region, note=Loop between two helices. Residues 554–572 (YGLPIMVTLMVAKWTGDLF) form a helical membrane-spanning segment. At 573–870 (NKGIYDVHIG…ARLRQHYQTL (298 aa)) the chain is on the cytoplasmic side. Tyrosine 577 is a binding site for chloride. Residues 606–663 (MEPNLTYVYPHTRIQSLVSILRTTVHHAFPVVTENRGNEKEFMKGNQLISNNIKFKKS) enclose the CBS 1 domain. Residue 631 to 633 (HHA) participates in ATP binding. Residue serine 774 is modified to Phosphoserine. One can recognise a CBS 2 domain in the interval 808-869 (MNPSPFTVSP…QARLRQHYQT (62 aa)). 850 to 853 (TRHN) serves as a coordination point for ATP.

Belongs to the chloride channel (TC 2.A.49) family. ClC-6/CLCN6 subfamily. In terms of processing, N-glycosylated on several asparagine residues. Detected in whole brain and in hippocampus neurons (at protein level). Detected in brain, trigeminus, dorsal root ganglion, spinal cord, eye, kidney, testis, skeletal muscle, thymus and pancreas. Isoform ClC-6c is expressed only in kidney.

The protein resides in the late endosome membrane. It catalyses the reaction 2 chloride(in) + H(+)(out) = 2 chloride(out) + H(+)(in). In terms of biological role, voltage-gated channel mediating the exchange of chloride ions against protons. Functions as antiporter and contributes to the acidification of the late endosome lumen. The CLC channel family contains both chloride channels and proton-coupled anion transporters that exchange chloride or another anion for protons. The presence of conserved gating glutamate residues is typical for family members that function as antiporters. The sequence is that of H(+)/Cl(-) exchange transporter 6 from Mus musculus (Mouse).